Here is a 226-residue protein sequence, read N- to C-terminus: Biosynthetic peptidoglycan transglycosylase (226 aa).

A helical transmembrane segment spans residues 7–29 (VMALSAIGLLLLPYLLTPLYRIG).

It belongs to the glycosyltransferase 51 family.

It localises to the cell inner membrane. It carries out the reaction [GlcNAc-(1-&gt;4)-Mur2Ac(oyl-L-Ala-gamma-D-Glu-L-Lys-D-Ala-D-Ala)](n)-di-trans,octa-cis-undecaprenyl diphosphate + beta-D-GlcNAc-(1-&gt;4)-Mur2Ac(oyl-L-Ala-gamma-D-Glu-L-Lys-D-Ala-D-Ala)-di-trans,octa-cis-undecaprenyl diphosphate = [GlcNAc-(1-&gt;4)-Mur2Ac(oyl-L-Ala-gamma-D-Glu-L-Lys-D-Ala-D-Ala)](n+1)-di-trans,octa-cis-undecaprenyl diphosphate + di-trans,octa-cis-undecaprenyl diphosphate + H(+). It functions in the pathway cell wall biogenesis; peptidoglycan biosynthesis. Its function is as follows. Peptidoglycan polymerase that catalyzes glycan chain elongation from lipid-linked precursors. The sequence is that of Biosynthetic peptidoglycan transglycosylase from Nitrobacter winogradskyi (strain ATCC 25391 / DSM 10237 / CIP 104748 / NCIMB 11846 / Nb-255).